Consider the following 352-residue polypeptide: Putative formin-like protein 15b (352 aa).

The 350-residue stretch at 1–350 (MTLFNFIKLF…KDAKEAEMEK (350 aa)) folds into the FH2 domain.

The protein belongs to the formin-like family. Class-II subfamily.

The polypeptide is Putative formin-like protein 15b (FH15B) (Arabidopsis thaliana (Mouse-ear cress)).